Consider the following 190-residue polypeptide: GTP cyclohydrolase 1 (190 aa).

Residues Cys79, His82, and Cys151 each coordinate Zn(2+).

This sequence belongs to the GTP cyclohydrolase I family. Toroid-shaped homodecamer, composed of two pentamers of five dimers.

It carries out the reaction GTP + H2O = 7,8-dihydroneopterin 3'-triphosphate + formate + H(+). Its pathway is cofactor biosynthesis; 7,8-dihydroneopterin triphosphate biosynthesis; 7,8-dihydroneopterin triphosphate from GTP: step 1/1. This is GTP cyclohydrolase 1 from Clostridioides difficile (strain 630) (Peptoclostridium difficile).